Consider the following 385-residue polypeptide: Chaperone protein DnaJ (385 aa).

Positions 5–70 (DYYEVLGVAK…QKRAAYDRYG (66 aa)) constitute a J domain. Residues 145–223 (GFDTEIRVPS…CDGVGRTRRN (79 aa)) form a CR-type zinc finger. Residues Cys158, Cys161, Cys175, Cys178, Cys197, Cys200, Cys211, and Cys214 each contribute to the Zn(2+) site. 4 CXXCXGXG motif repeats span residues 158–165 (CDTCHGSG), 175–182 (CRTCGGSG), 197–204 (CPTCHGTG), and 211–218 (CPSCDGVG).

Belongs to the DnaJ family. In terms of assembly, homodimer. The cofactor is Zn(2+).

It is found in the cytoplasm. Functionally, participates actively in the response to hyperosmotic and heat shock by preventing the aggregation of stress-denatured proteins and by disaggregating proteins, also in an autonomous, DnaK-independent fashion. Unfolded proteins bind initially to DnaJ; upon interaction with the DnaJ-bound protein, DnaK hydrolyzes its bound ATP, resulting in the formation of a stable complex. GrpE releases ADP from DnaK; ATP binding to DnaK triggers the release of the substrate protein, thus completing the reaction cycle. Several rounds of ATP-dependent interactions between DnaJ, DnaK and GrpE are required for fully efficient folding. Also involved, together with DnaK and GrpE, in the DNA replication of plasmids through activation of initiation proteins. In Bordetella pertussis (strain Tohama I / ATCC BAA-589 / NCTC 13251), this protein is Chaperone protein DnaJ.